Consider the following 215-residue polypeptide: Urease accessory protein UreG (215 aa).

A disordered region spans residues 1 to 21; sequence MNAPASSPARRTKKLPPLRVG. Residue 24–31 coordinates GTP; the sequence is GPVGSGKT.

This sequence belongs to the SIMIBI class G3E GTPase family. UreG subfamily. In terms of assembly, homodimer. UreD, UreF and UreG form a complex that acts as a GTP-hydrolysis-dependent molecular chaperone, activating the urease apoprotein by helping to assemble the nickel containing metallocenter of UreC. The UreE protein probably delivers the nickel.

It is found in the cytoplasm. Its function is as follows. Facilitates the functional incorporation of the urease nickel metallocenter. This process requires GTP hydrolysis, probably effectuated by UreG. The protein is Urease accessory protein UreG of Burkholderia vietnamiensis (strain G4 / LMG 22486) (Burkholderia cepacia (strain R1808)).